Consider the following 224-residue polypeptide: Transmembrane emp24 domain-containing protein 7 (224 aa).

The N-terminal stretch at 1–34 is a signal peptide; sequence MPRPGSAQRWAAVAGRWGCRLLALLLLVPGPGGA. Residues 35–187 are Lumenal-facing; sequence SEITFELPDN…RAEDLNTRVA (153 aa). Residues 46 to 128 form the GOLD domain; that stretch reads KQCFYEDIAQ…HKTVYFDFQV (83 aa). Asn103 carries N-linked (GlcNAc...) asparagine glycosylation. A helical transmembrane segment spans residues 188-208; that stretch reads YWSVGEALILLVVSIGQVFLL. Over 209–224 the chain is Cytoplasmic; it reads KSFFSDKRTTTTRVGS. The short motif at 211–212 is the COPII vesicle coat-binding element; sequence FF. The short motif at 211–224 is the COPI vesicle coat-binding element; that stretch reads FFSDKRTTTTRVGS.

Belongs to the EMP24/GP25L family. As to quaternary structure, predominantly monomeric and to lesser extent homodimeric in endoplasmic reticulum, endoplasmic reticulum-Golgi intermediate compartment and cis-Golgi network. Oligomerizes with other members of the EMP24/GP25L family such as TMED2, TMED9 and TMED10. Interacts (via C-terminus) with COPG1; the interaction involves dimeric TMED7. N-linked glycosylated in complex form containing terminal sialic acid.

It localises to the endoplasmic reticulum membrane. The protein resides in the golgi apparatus. It is found in the cis-Golgi network membrane. Its subcellular location is the endoplasmic reticulum-Golgi intermediate compartment membrane. The protein localises to the cytoplasmic vesicle. It localises to the COPI-coated vesicle membrane. The protein resides in the COPII-coated vesicle membrane. Potential role in vesicular protein trafficking, mainly in the early secretory pathway. Appears to play a role in the biosynthesis of secreted cargo including processing and post-translational modifications. In Homo sapiens (Human), this protein is Transmembrane emp24 domain-containing protein 7 (TMED7).